We begin with the raw amino-acid sequence, 547 residues long: Hydroxylamine reductase (547 aa).

[4Fe-4S] cluster-binding residues include C5, C8, C17, and C23. Residues H242, E266, C310, C401, C429, C454, E489, and K491 each coordinate hybrid [4Fe-2O-2S] cluster. C401 bears the Cysteine persulfide mark.

It belongs to the HCP family. [4Fe-4S] cluster is required as a cofactor. Requires hybrid [4Fe-2O-2S] cluster as cofactor.

The protein resides in the cytoplasm. It catalyses the reaction A + NH4(+) + H2O = hydroxylamine + AH2 + H(+). Catalyzes the reduction of hydroxylamine to form NH(3) and H(2)O. The polypeptide is Hydroxylamine reductase (Thermoanaerobacter pseudethanolicus (strain ATCC 33223 / 39E) (Clostridium thermohydrosulfuricum)).